The sequence spans 869 residues: MLRPGALRLRGLALRGSPRRPSSAGLREGQESPASPPEWKDRAETVIIGGGCVGVSLAYHLAKAGMRDVVLMEKSELTAGSTWHAAGLTTYFHPGINLKKIHYDSIKLYERLEEETGQVVGFHQPGSIRLATTPVRVDEFKYQMTRTNWHATEQYIIEPEKIHELFPLLNMNKILAGLYNPGDGHIDPYSLTMALAAGARKYGALLKYPAPVTSLKPRPDGTWDVETPQGSVRANRIVNAAGFWAREVGKMIGLDHPLIPVQHQYVVTSTIPEVKALKRELPVLRDLEGSYYLRQERDGLLFGPYESQEKMKLQASWVTHGVPPGFGKELFESDLDRISDHLEAAMEMIPVLKKADIINVVNGPITYSPDILPMVGPHQGVRNYWVATGFGYGIIHAGGVGKFLSDWILHGEPPFDLIELDPNRYGKWTTTQYTEAKARESYGFNNIVGYPKEERFAGRPTQRVSGLYKTLKSKCSMGFHAGWEQPHWFYKPGQDTQYRPSFRRTNWFEPVGSEYKQVMQRVGVIDLSPFGKFNIKGRDSTQLLDHLFANVIPKVGFTNISHMLTPRGRVYAELTVSQQSPGEFLLITGSGSELHDLRWIEEAAFRGGYDVEIQNITDEFGVLGVAGPYARRVLQKLTSEDLSDDAFKFLQTKSFNISDIPVTAIRISYTGELGWELYHRREDSATLYERIMSAGQEEGIGDFGTYALNALRLEKAFRAWGSEMNCDTNPLEAGLEYFVKLNKPADFIGKQALKQIKTEGLKRRLVCLTVATDDVDPEGNESIWYKGKVVGNTTSGSYSYSIQKSLAFAYVPVQLSEVGQQVEVELLGKNYPATIIQEPLVLTEPARARLQKDGKKTNLEKGPSRTTKL.

Residues 1–43 constitute a mitochondrion transit peptide; that stretch reads MLRPGALRLRGLALRGSPRRPSSAGLREGQESPASPPEWKDRA. The disordered stretch occupies residues 14 to 39; it reads LRGSPRRPSSAGLREGQESPASPPEW. FAD is bound by residues 52-53, 73-74, and 80-88; these read CV, EK, and GSTWHAAGL. At H84 the chain carries Tele-8alpha-FAD histidine. At K107 the chain carries N6-acetyllysine. K141 carries the post-translational modification N6-acetyllysine; alternate. N6-succinyllysine; alternate is present on K141. K161 is subject to N6-acetyllysine. V212 lines the FAD pocket. K216 bears the N6-acetyllysine mark. Residue W244 coordinates FAD. 2 positions are modified to N6-succinyllysine: K310 and K312. 2 positions are modified to N6-acetyllysine: K328 and K353. 390 to 395 provides a ligand contact to FAD; sequence FGYGII. K427, K469, and K516 each carry N6-acetyllysine; alternate. An N6-succinyllysine; alternate mark is found at K427, K469, and K516. 573-575 serves as a coordination point for (6S)-5,6,7,8-tetrahydrofolate; the sequence is ELT. Position 648 is an N6-acetyllysine; alternate (K648). K648 is modified (N6-succinyllysine; alternate). Residues Y669, 676–678, and Y737 each bind (6S)-5,6,7,8-tetrahydrofolate; that span reads ELY. Position 757 is an N6-acetyllysine (K757). N6-acetyllysine; alternate is present on K786. K786 bears the N6-succinyllysine; alternate mark. K788 is subject to N6-succinyllysine.

The protein belongs to the GcvT family. FAD serves as cofactor.

The protein localises to the mitochondrion. The enzyme catalyses (6S)-5,6,7,8-tetrahydrofolyl-(gamma-L-Glu)(n) + N,N-dimethylglycine + oxidized [electron-transfer flavoprotein] + H(+) = (6R)-5,10-methylenetetrahydrofolyl-(gamma-L-Glu)(n) + sarcosine + reduced [electron-transfer flavoprotein]. Its pathway is amine and polyamine degradation; betaine degradation; sarcosine from betaine: step 2/2. Its function is as follows. Catalyzes the demethylation of N,N-dimethylglycine to sarcosine. Also has activity with sarcosine in vitro. This Mus musculus (Mouse) protein is Dimethylglycine dehydrogenase, mitochondrial (Dmgdh).